The sequence spans 141 residues: Hemoglobin subunit alpha-1 (141 aa).

The Globin domain maps to 1–141; that stretch reads VLSGSDKNNV…VGNVLTAKYR (141 aa). Residue His-58 participates in O2 binding. His-87 lines the heme b pocket.

This sequence belongs to the globin family. In terms of assembly, heterotetramer of two alpha chains and two beta chains. In terms of tissue distribution, red blood cells.

Its function is as follows. Involved in oxygen transport from the lung to the various peripheral tissues. This Stercorarius maccormicki (South polar skua) protein is Hemoglobin subunit alpha-1.